We begin with the raw amino-acid sequence, 596 residues long: Fructan 1-exohydrolase (596 aa).

The N-terminal stretch at 1–20 (MAQAWAFLLPVLVLGSYVTS) is a signal peptide. Residue aspartate 75 is part of the active site. N-linked (GlcNAc...) asparagine glycans are attached at residues asparagine 168, asparagine 236, and asparagine 248. Cysteines 446 and 492 form a disulfide. The N-linked (GlcNAc...) asparagine glycan is linked to asparagine 567.

Belongs to the glycosyl hydrolase 32 family.

It carries out the reaction Hydrolysis of terminal, non-reducing (2-&gt;1)-linked beta-D-fructofuranose residues in fructans.. Inhibited by sucrose. Hydrolyzes inulin-type beta-(2,1)-fructans. May play a role as a beta-(2,1)-trimmer during graminan biosynthesis. The polypeptide is Fructan 1-exohydrolase (Aegilops tauschii (Tausch's goatgrass)).